The primary structure comprises 205 residues: ATP synthase subunit b (205 aa).

The signal sequence occupies residues 1 to 27; it reads MKLNKKHLVAILSVLSLSIIVVPLLTS. Cys28 is lipidated: N-palmitoyl cysteine. The S-diacylglycerol cysteine moiety is linked to residue Cys28. The chain crosses the membrane as a helical span at residues 48–68; sequence VWVFIAQVIAMCVVFSLVLWL.

Belongs to the ATPase B chain family. In terms of assembly, F-type ATPases have 2 components, F(1) - the catalytic core - and F(0) - the membrane proton channel. F(1) has five subunits: alpha(3), beta(3), gamma(1), delta(1), epsilon(1). F(0) has three main subunits: a(1), b(2) and c(10-14). The alpha and beta chains form an alternating ring which encloses part of the gamma chain. F(1) is attached to F(0) by a central stalk formed by the gamma and epsilon chains, while a peripheral stalk is formed by the delta and b chains.

It is found in the cell membrane. Functionally, f(1)F(0) ATP synthase produces ATP from ADP in the presence of a proton or sodium gradient. F-type ATPases consist of two structural domains, F(1) containing the extramembraneous catalytic core and F(0) containing the membrane proton channel, linked together by a central stalk and a peripheral stalk. During catalysis, ATP synthesis in the catalytic domain of F(1) is coupled via a rotary mechanism of the central stalk subunits to proton translocation. Its function is as follows. Component of the F(0) channel, it forms part of the peripheral stalk, linking F(1) to F(0). The sequence is that of ATP synthase subunit b from Ureaplasma parvum serovar 3 (strain ATCC 27815 / 27 / NCTC 11736).